The primary structure comprises 147 residues: Large ribosomal subunit protein uL11 (147 aa).

The protein belongs to the universal ribosomal protein uL11 family. Part of the ribosomal stalk of the 50S ribosomal subunit. Interacts with L10 and the large rRNA to form the base of the stalk. L10 forms an elongated spine to which L12 dimers bind in a sequential fashion forming a multimeric L10(L12)X complex. Post-translationally, one or more lysine residues are methylated.

In terms of biological role, forms part of the ribosomal stalk which helps the ribosome interact with GTP-bound translation factors. This Cytophaga hutchinsonii (strain ATCC 33406 / DSM 1761 / CIP 103989 / NBRC 15051 / NCIMB 9469 / D465) protein is Large ribosomal subunit protein uL11.